The sequence spans 923 residues: Protein dct-6 (923 aa).

Positions 312-347 form a coiled coil; sequence DMNDQIEQMISLLVDELSELEKLEQLCKEVERTGNQ.

In terms of biological role, may have a role in tumor suppression. The polypeptide is Protein dct-6 (dct-6) (Caenorhabditis elegans).